The chain runs to 706 residues: Elongation factor G 1 (706 aa).

Positions 8–290 (NRYRNIGICA…AVIDYLPAPT (283 aa)) constitute a tr-type G domain. GTP is bound by residues 17 to 24 (AHVDAGKT), 88 to 92 (DTPGH), and 142 to 145 (NKMD).

The protein belongs to the TRAFAC class translation factor GTPase superfamily. Classic translation factor GTPase family. EF-G/EF-2 subfamily.

The protein localises to the cytoplasm. Functionally, catalyzes the GTP-dependent ribosomal translocation step during translation elongation. During this step, the ribosome changes from the pre-translocational (PRE) to the post-translocational (POST) state as the newly formed A-site-bound peptidyl-tRNA and P-site-bound deacylated tRNA move to the P and E sites, respectively. Catalyzes the coordinated movement of the two tRNA molecules, the mRNA and conformational changes in the ribosome. This chain is Elongation factor G 1, found in Pseudomonas aeruginosa (strain ATCC 15692 / DSM 22644 / CIP 104116 / JCM 14847 / LMG 12228 / 1C / PRS 101 / PAO1).